Here is a 253-residue protein sequence, read N- to C-terminus: Ribosomal RNA small subunit methyltransferase J (253 aa).

S-adenosyl-L-methionine is bound by residues 101–102, 117–118, and Asp169; these read RD and ER.

It belongs to the methyltransferase superfamily. RsmJ family.

Its subcellular location is the cytoplasm. It catalyses the reaction guanosine(1516) in 16S rRNA + S-adenosyl-L-methionine = N(2)-methylguanosine(1516) in 16S rRNA + S-adenosyl-L-homocysteine + H(+). Its function is as follows. Specifically methylates the guanosine in position 1516 of 16S rRNA. This is Ribosomal RNA small subunit methyltransferase J from Psychromonas ingrahamii (strain DSM 17664 / CCUG 51855 / 37).